A 342-amino-acid chain; its full sequence is Nicotinate-nucleotide--dimethylbenzimidazole phosphoribosyltransferase (342 aa).

Glu311 acts as the Proton acceptor in catalysis.

It belongs to the CobT family.

It carries out the reaction 5,6-dimethylbenzimidazole + nicotinate beta-D-ribonucleotide = alpha-ribazole 5'-phosphate + nicotinate + H(+). It functions in the pathway nucleoside biosynthesis; alpha-ribazole biosynthesis; alpha-ribazole from 5,6-dimethylbenzimidazole: step 1/2. Functionally, catalyzes the synthesis of alpha-ribazole-5'-phosphate from nicotinate mononucleotide (NAMN) and 5,6-dimethylbenzimidazole (DMB). This Shewanella sediminis (strain HAW-EB3) protein is Nicotinate-nucleotide--dimethylbenzimidazole phosphoribosyltransferase.